We begin with the raw amino-acid sequence, 231 residues long: Urease accessory protein UreF (231 aa).

Belongs to the UreF family. UreD, UreF and UreG form a complex that acts as a GTP-hydrolysis-dependent molecular chaperone, activating the urease apoprotein by helping to assemble the nickel containing metallocenter of UreC. The UreE protein probably delivers the nickel.

It localises to the cytoplasm. In terms of biological role, required for maturation of urease via the functional incorporation of the urease nickel metallocenter. The sequence is that of Urease accessory protein UreF from Marinobacter nauticus (strain ATCC 700491 / DSM 11845 / VT8) (Marinobacter aquaeolei).